A 98-amino-acid chain; its full sequence is NADH-ubiquinone oxidoreductase chain 4L (98 aa).

The next 3 membrane-spanning stretches (helical) occupy residues 1–21, 29–49, and 61–81; these read MSLT…GLLM, SLLC…MAIL, and IILL…LVMV.

The protein belongs to the complex I subunit 4L family. As to quaternary structure, core subunit of respiratory chain NADH dehydrogenase (Complex I) which is composed of 45 different subunits.

It localises to the mitochondrion inner membrane. The enzyme catalyses a ubiquinone + NADH + 5 H(+)(in) = a ubiquinol + NAD(+) + 4 H(+)(out). In terms of biological role, core subunit of the mitochondrial membrane respiratory chain NADH dehydrogenase (Complex I) which catalyzes electron transfer from NADH through the respiratory chain, using ubiquinone as an electron acceptor. Part of the enzyme membrane arm which is embedded in the lipid bilayer and involved in proton translocation. This is NADH-ubiquinone oxidoreductase chain 4L (MT-ND4L) from Vampyressa melissa (Melissa's yellow-eared bat).